A 244-amino-acid polypeptide reads, in one-letter code: Transcriptional regulatory protein YpdB (244 aa).

The Response regulatory domain maps to 2–116 (KVIIVEDEFL…RITGMLQKLE (115 aa)). A 4-aspartylphosphate modification is found at Asp-53. Residues 139–244 (INLVKDERII…VKEFRQLMHL (106 aa)) enclose the HTH LytTR-type domain.

Post-translationally, phosphorylated by YpdA.

Its subcellular location is the cytoplasm. In terms of biological role, member of the two-component regulatory system YpdA/YpdB. YpdB regulates expression of yhjX by binding to its promoter region. The sequence is that of Transcriptional regulatory protein YpdB (ypdB) from Escherichia coli O157:H7.